The sequence spans 335 residues: Nuclear distribution protein nudE homolog 1 (335 aa).

The self-association stretch occupies residues 1-93; that stretch reads MEDSGKTFSS…VQHSEGYRQI (93 aa). A coiled-coil region spans residues 18–188; that stretch reads WKDLAMTYKQ…ELAVQQKQEK (171 aa). The segment at 88-156 is interaction with PAFAH1B1; sequence EGYRQISALE…ERNAFLESEL (69 aa). The tract at residues 167-290 is interaction with CENPF; the sequence is QRLKDEARDL…QSPNRTGGPA (124 aa). Residues 181–246 are disordered; it reads AVQQKQEKPR…DDSTGGTPLT (66 aa). Polar residues predominate over residues 204–214; it reads TAVQATGSVPS. Ser211 carries the phosphoserine modification. 2 positions are modified to phosphothreonine: Thr215 and Thr228. Phosphoserine is present on residues Ser231 and Ser239. Thr243 and Thr246 each carry phosphothreonine. The S-palmitoyl cysteine; by ZDHHC2, ZDHHC3 and ZDHHC7 moiety is linked to residue Cys274. The segment at 279-335 is disordered; it reads YDQSPNRTGGPASGRSSKNRDGGERRPSSTSVPLGDKGLDTSCRWLSKSTTRSSSSC. Ser282 is subject to Phosphoserine. The span at 296 to 305 shows a compositional bias: basic and acidic residues; the sequence is KNRDGGERRP. Residue Ser309 is modified to Phosphoserine. Residues 325-335 show a composition bias toward low complexity; that stretch reads SKSTTRSSSSC.

It belongs to the nudE family. As to quaternary structure, homodimer. Interacts with CNTRL, LIS1, dynein, SLMAP and TCP1. Interacts with CENPF, dynactin, tubulin gamma, PAFAH1B1, PCM1 and PCNT. Interacts with ZNF365. Interacts with GTP-bound RAB9A and RAB9B; the interaction leads to RAB9-dynein motor tethering. Interacts (via C-terminus) with MCRS1 (via C-terminus); phosphorylation of NDE1 inhibits the interaction. In terms of processing, phosphorylated in mitosis. Phosphorylated in vitro by CDC2. Phosphorylation at Thr-246 is essential for the G2/M transition. In terms of tissue distribution, expressed in the neuroepithelium throughout the developing brain, including the cerebral cortex and cerebellum.

The protein resides in the cytoplasm. It localises to the cytoskeleton. It is found in the microtubule organizing center. Its subcellular location is the centrosome. The protein localises to the chromosome. The protein resides in the centromere. It localises to the kinetochore. It is found in the spindle. Its subcellular location is the cleavage furrow. The protein localises to the cytoplasmic vesicle membrane. In terms of biological role, required for centrosome duplication and formation and function of the mitotic spindle. Essential for the development of the cerebral cortex. May regulate the production of neurons by controlling the orientation of the mitotic spindle during division of cortical neuronal progenitors of the proliferative ventricular zone of the brain. Orientation of the division plane perpendicular to the layers of the cortex gives rise to two proliferative neuronal progenitors whereas parallel orientation of the division plane yields one proliferative neuronal progenitor and a postmitotic neuron. A premature shift towards a neuronal fate within the progenitor population may result in an overall reduction in the final number of neurons and an increase in the number of neurons in the deeper layers of the cortex. Acts as a RAB9A/B effector that tethers RAB9-associated late endosomes to the dynein motor for their retrograde transport to the trans-Golgi network. This Homo sapiens (Human) protein is Nuclear distribution protein nudE homolog 1.